The primary structure comprises 364 residues: MKKAILMMTFGSPEEIIFEGVADFFTNIRRGVRPQDHEIQTLYDNYVRIGGTPLQKITRQEVALVEARLGSEYSVYFANKFSSPFIPDVIGQMEADGIEQCICLILEPHYSFYSVMGYEKFLESKQIQFLVIKDWYQEEALLNYWADEIAKILKEEVKQDSFKVIFSAHSVPIFALDFGDPYIDQIFENSKLVAEKLGLSSEQYTNTWQSESDIGIPWIKPDVLEYLREQTEHPDHYIFVPISFISEHIEVLFDNDVECYDLCQEFGVNYHRPPMPNTDSRLIDALVNTVRVNENQEFKEFLPEEETFDELVPSDETKNILAESQDLQMPEFVKKLIEKKGRENVKMPYLIKKMLEKAGKLPKE.

Arg-29 and Tyr-118 together coordinate Fe-coproporphyrin III. Fe(2+)-binding residues include His-169 and Glu-250.

It belongs to the ferrochelatase family.

The protein localises to the cytoplasm. It carries out the reaction Fe-coproporphyrin III + 2 H(+) = coproporphyrin III + Fe(2+). It functions in the pathway porphyrin-containing compound metabolism; protoheme biosynthesis. Functionally, involved in coproporphyrin-dependent heme b biosynthesis. Catalyzes the insertion of ferrous iron into coproporphyrin III to form Fe-coproporphyrin III. The chain is Coproporphyrin III ferrochelatase from Streptococcus pneumoniae serotype 4 (strain ATCC BAA-334 / TIGR4).